The chain runs to 436 residues: 3-ketoacyl-CoA thiolase (436 aa).

Residue Cys-99 is the Acyl-thioester intermediate of the active site. Active-site proton acceptor residues include His-392 and Cys-422.

The protein belongs to the thiolase-like superfamily. Thiolase family. As to quaternary structure, heterotetramer of two alpha chains (FadJ) and two beta chains (FadI).

The protein resides in the cytoplasm. It carries out the reaction an acyl-CoA + acetyl-CoA = a 3-oxoacyl-CoA + CoA. It participates in lipid metabolism; fatty acid beta-oxidation. Catalyzes the final step of fatty acid oxidation in which acetyl-CoA is released and the CoA ester of a fatty acid two carbons shorter is formed. This chain is 3-ketoacyl-CoA thiolase, found in Enterobacter sp. (strain 638).